Reading from the N-terminus, the 432-residue chain is Glutamate-1-semialdehyde 2,1-aminomutase 1 (432 aa).

Lys-268 is subject to N6-(pyridoxal phosphate)lysine.

It belongs to the class-III pyridoxal-phosphate-dependent aminotransferase family. HemL subfamily. In terms of assembly, homodimer. Pyridoxal 5'-phosphate serves as cofactor.

It localises to the cytoplasm. It carries out the reaction (S)-4-amino-5-oxopentanoate = 5-aminolevulinate. It participates in porphyrin-containing compound metabolism; protoporphyrin-IX biosynthesis; 5-aminolevulinate from L-glutamyl-tRNA(Glu): step 2/2. This is Glutamate-1-semialdehyde 2,1-aminomutase 1 from Bacillus cereus (strain ZK / E33L).